The chain runs to 597 residues: Arginine--tRNA ligase (597 aa).

The 'HIGH' region signature appears at 138-148; that stretch reads ANPTGPMHVGH.

It belongs to the class-I aminoacyl-tRNA synthetase family. As to quaternary structure, monomer.

It localises to the cytoplasm. The enzyme catalyses tRNA(Arg) + L-arginine + ATP = L-arginyl-tRNA(Arg) + AMP + diphosphate. This Nitrobacter hamburgensis (strain DSM 10229 / NCIMB 13809 / X14) protein is Arginine--tRNA ligase.